The primary structure comprises 614 residues: uncharacterized protein (614 aa).

Residues 23-68 are disordered; that stretch reads YPIPSHNGDGESEKNSSDSTSSKVNAKVTSSLQGAPSTNDENSVSP. The span at 49–68 shows a compositional bias: polar residues; that stretch reads KVTSSLQGAPSTNDENSVSP.

To C.trachomatis CT875.

This is an uncharacterized protein from Chlamydia muridarum (strain MoPn / Nigg).